A 364-amino-acid chain; its full sequence is Aminomethyltransferase (364 aa).

The protein belongs to the GcvT family. In terms of assembly, the glycine cleavage system is composed of four proteins: P, T, L and H.

It carries out the reaction N(6)-[(R)-S(8)-aminomethyldihydrolipoyl]-L-lysyl-[protein] + (6S)-5,6,7,8-tetrahydrofolate = N(6)-[(R)-dihydrolipoyl]-L-lysyl-[protein] + (6R)-5,10-methylene-5,6,7,8-tetrahydrofolate + NH4(+). The glycine cleavage system catalyzes the degradation of glycine. The sequence is that of Aminomethyltransferase from Shewanella loihica (strain ATCC BAA-1088 / PV-4).